The following is an 874-amino-acid chain: Alanine--tRNA ligase (874 aa).

Zn(2+) is bound by residues His-563, His-567, Cys-665, and His-669.

This sequence belongs to the class-II aminoacyl-tRNA synthetase family. The cofactor is Zn(2+).

Its subcellular location is the cytoplasm. It carries out the reaction tRNA(Ala) + L-alanine + ATP = L-alanyl-tRNA(Ala) + AMP + diphosphate. Its function is as follows. Catalyzes the attachment of alanine to tRNA(Ala) in a two-step reaction: alanine is first activated by ATP to form Ala-AMP and then transferred to the acceptor end of tRNA(Ala). Also edits incorrectly charged Ser-tRNA(Ala) and Gly-tRNA(Ala) via its editing domain. The sequence is that of Alanine--tRNA ligase from Haemophilus influenzae (strain ATCC 51907 / DSM 11121 / KW20 / Rd).